The following is a 1067-amino-acid chain: Probable importin-5 homolog (1067 aa).

24 HEAT repeats span residues 3 to 34 (LQPI…YKNH), 42 to 75 (SFIV…SGNI), 93 to 120 (FAVR…QLVP), 125 to 152 (PEIL…LIGA), 164 to 197 (APHF…STFI), 206 to 243 (VFKP…IAQY), 251 to 286 (NFDM…FAEF), 295 to 347 (LYLE…HCVS), 349 to 381 (GLWE…SSIS), 385 to 425 (EKQI…ASYL), 427 to 466 (REMQ…LDEI), 468 to 508 (PNRV…VDGI), 510 to 553 (EEFT…GLAV), 555 to 596 (KKVF…AQCL), 598 to 658 (EDFI…AMEL), 661 to 703 (HLFP…SKQH), 718 to 757 (FTSR…MDIG), 763 to 826 (ADRI…CIQF), 832 to 869 (PYIA…ENGG), 876 to 909 (YPHI…AAEN), 917 to 960 (FLME…ITNL), 969 to 999 (PQTI…TLIR), 1008 to 1040 (QQYI…LALR), and 1041 to 1064 (SQES…LANF).

It belongs to the importin beta family. Importin beta-3 subfamily.

It localises to the cytoplasm. The protein resides in the nucleus. In terms of biological role, functions in nuclear protein import as nuclear transport receptor. Serves as receptor for nuclear localization signals (NLS) in cargo substrates. In Dictyostelium discoideum (Social amoeba), this protein is Probable importin-5 homolog.